The sequence spans 384 residues: Aryl-alcohol dehydrogenase GME11368 (384 aa).

Aspartate 69 provides a ligand contact to NADP(+). The active-site Proton donor is the tyrosine 74. NADP(+) is bound by residues serine 177–aspartate 178, glutamine 203, and arginine 301–asparagine 309.

The protein belongs to the aldo/keto reductase family. Aldo/keto reductase 2 subfamily.

It participates in secondary metabolite biosynthesis. Functionally, aryl-alcohol dehydrogenase; part of the gene cluster that mediates the biosynthesis of dibenzodioxocinones such as pestalotiollide B, a novel class of inhibitors against cholesterol ester transfer protein (CEPT). The biosynthesis initiates from condensation of acetate and malonate units catalyzed by the non-reducing PKS pks8/GME11356. Pks8/GME11356 lacks a thioesterase (TE) domain, which is important to the cyclizing of the third ring of atrochrysone carboxylic acid, and the esterase GME11355 might play the role of TE and catalyzes the cyclization reaction of the C ring. The lactamase-like protein GME11357 (or other beta-lactamases in Pestalotiopsis microspora) probably hydrolyzes the thioester bond between the ACP of pks8/GME11356 and the intermediate to release atrochrysone carboxylic acid, which is spontaneously dehydrates to form endocrocin anthrone. Endocrocin anthrone is further converted to emodin via the endocrocin intermediate. Emodin is then oxidized by several enzymes such as the Baeyer-Villiger oxidase GME11358, the oxidoreductase GME11367, the short chain dehydrogenase/reductase GME11373, as well as by other oxidoreductases from the cluster, to modify the A and C rings and open the B ring, and finally yield monodictyphenone. The prenyltransferase GME11375 may catalyze the addition reaction between the C5 side chains and the carbon bone of dibenzodioxocinones. The remaining biochemical reactions to the final product dibenzodioxocinones should be methylation catalyzed by methyltransferase GME11366 and reduction and lactonization reaction catalyzed by a series of oxidordeuctases. This Pestalotiopsis microspora protein is Aryl-alcohol dehydrogenase GME11368.